The chain runs to 492 residues: GTPase-activating protein MSB4 (492 aa).

The region spanning 147–367 (GIPAEWRGNA…RIWDCLFYEE (221 aa)) is the Rab-GAP TBC domain.

It localises to the cytoplasm. The protein localises to the bud. Its subcellular location is the bud neck. Its function is as follows. Regulates exocytosis by functioning as a GAP for SEC4. Also required for efficient polarization of the actin patches. In Saccharomyces cerevisiae (strain ATCC 204508 / S288c) (Baker's yeast), this protein is GTPase-activating protein MSB4 (MSB4).